A 500-amino-acid chain; its full sequence is AAA-ATPase At3g28580 (500 aa).

A helical transmembrane segment spans residues 7–29; that stretch reads LWTNTGSALATLMFVYTIFKQFF. Positions 174 to 193 are disordered; the sequence is NRERKLYSNTPGQSHGNNSK. Residues 180 to 193 show a composition bias toward polar residues; the sequence is YSNTPGQSHGNNSK. 247–254 is an ATP binding site; sequence GPPGTGKS. A disordered region spans residues 462-500; it reads KEEAKKKVEEEEEEKQRKKEKVKEIEAEKEKKKKIEEEN.

The protein belongs to the AAA ATPase family. BCS1 subfamily. Mg(2+) is required as a cofactor.

The protein resides in the membrane. It catalyses the reaction ATP + H2O = ADP + phosphate + H(+). The polypeptide is AAA-ATPase At3g28580 (Arabidopsis thaliana (Mouse-ear cress)).